A 148-amino-acid polypeptide reads, in one-letter code: uncharacterized protein (148 aa).

The next 4 membrane-spanning stretches (helical) occupy residues 29–49 (FSLVIVTLMMSIVVVLAAAKE), 61–81 (PIILMISIGIVVFLLIPPLVM), 99–119 (FIVFTFLGLIPIGFLIPNGFL), and 121–141 (ILVSIAGTLVSIASVAVTLCI).

It is found in the cell membrane. This is an uncharacterized protein from Bacillus subtilis (strain 168).